We begin with the raw amino-acid sequence, 242 residues long: Biosynthetic peptidoglycan transglycosylase (242 aa).

Residues Leu-19–Val-39 traverse the membrane as a helical segment.

This sequence belongs to the glycosyltransferase 51 family.

The protein localises to the cell inner membrane. The catalysed reaction is [GlcNAc-(1-&gt;4)-Mur2Ac(oyl-L-Ala-gamma-D-Glu-L-Lys-D-Ala-D-Ala)](n)-di-trans,octa-cis-undecaprenyl diphosphate + beta-D-GlcNAc-(1-&gt;4)-Mur2Ac(oyl-L-Ala-gamma-D-Glu-L-Lys-D-Ala-D-Ala)-di-trans,octa-cis-undecaprenyl diphosphate = [GlcNAc-(1-&gt;4)-Mur2Ac(oyl-L-Ala-gamma-D-Glu-L-Lys-D-Ala-D-Ala)](n+1)-di-trans,octa-cis-undecaprenyl diphosphate + di-trans,octa-cis-undecaprenyl diphosphate + H(+). It functions in the pathway cell wall biogenesis; peptidoglycan biosynthesis. Its function is as follows. Peptidoglycan polymerase that catalyzes glycan chain elongation from lipid-linked precursors. This chain is Biosynthetic peptidoglycan transglycosylase, found in Escherichia coli O139:H28 (strain E24377A / ETEC).